A 780-amino-acid polypeptide reads, in one-letter code: uncharacterized protein (780 aa).

A BTB domain is found at 10-80 (NNNIIKLNIG…MRTGTFTLPY (71 aa)).

This is an uncharacterized protein from Dictyostelium discoideum (Social amoeba).